The primary structure comprises 443 residues: MFLAQEIIRKKRNAEVLSTEEIQFFVNGITNNTVSEGQIAALGMAVYFNDMNMDERIALTTSMRDSGTVLDWKSLDLNGPIIDKHSTGGVGDVISLMLGPMAAACGGYVPMISGRGLGHTGGTLDKFDAIPGYNTEPDSALFRKVVKEAGVAIIGQTGDLVPADKRFYSIRDNTATVESISLITASILSKKLAAGLDALAMDVKVGTGAFMPTYEASEELARSITAVANGAGTKTTALLTDMNQVLASCAGNAVEVKEAVDFMTGAYRNPRLYEVTMGLCAEMLTLGGIASNEAEARAKLNEVLDNGKAAEIFGRMVSGLGGPTDFVENYSKYLPDSQIIRPVYAEQTGFATAMDTRELGLAVVTLGGGRRKPGDTLDYSVGLTKVCALGDEVSADKPIAFIHAQSEGAFAEAEAAVKKAIHIGDTKPEKTPEIYRYIRESDL.

This sequence belongs to the thymidine/pyrimidine-nucleoside phosphorylase family. Homodimer.

It carries out the reaction thymidine + phosphate = 2-deoxy-alpha-D-ribose 1-phosphate + thymine. Its pathway is pyrimidine metabolism; dTMP biosynthesis via salvage pathway; dTMP from thymine: step 1/2. In terms of biological role, the enzymes which catalyze the reversible phosphorolysis of pyrimidine nucleosides are involved in the degradation of these compounds and in their utilization as carbon and energy sources, or in the rescue of pyrimidine bases for nucleotide synthesis. This chain is Thymidine phosphorylase, found in Shewanella piezotolerans (strain WP3 / JCM 13877).